The sequence spans 742 residues: MPTPSAQLDQGIISSNGGTSGVSASSTRFRHRKISVKQKLRVYKASDLKDLDQDELQQRELQEIETGVEKNEEREVHLHKILQKNQLQLQDLYIPTPDASRVWKEFDEMYQGRFTTPASYIQFSVQLEDCCGPAYNMDERDEAYLAELNGGESEALTEDEFELLMTNFESAIRERQPFLAMDPESLLMYEDLKPTMLKNDIGDAGLKTELAAELQLGDQPFVTKFDSPATLRTRNMVELIEKYGAEVYEYWKKRKVEVAGGSIIPSLKAERSTDKDDNDPYFCFRRREVRQTRKTRRVDTQNSQKLRLLYQQLQYTKELALLVAKREKMSMDMLLRDREIFQLRCDIKTVKRGLGIKGEDELLISQKRRKLVSNVITNKKYVSTQADAAALRRLRVAKVKDKKLLSKQLSSTDLKRQQSQLQKLDQQQRQQQQQQQPQINGAQCQQDGSGVSHVYVKLPTSKIPDIVLEDVDKVLSMKERNTKRFVEEKMKKRREEDGDIFFNLTDDPYNPVFEITIPQNISPTNAPFSSIVSSNFEISRSYYTPNLQNCITGNTNSVLAYNKEGEIVESQKYKKIEFYSPFEEKNDSHTREIPVRFRRRLGRYGVEYIDRKDVSRNPSDLLGEFMDFSLIAEQEQSSDAVNVYDSQLDELFRLHDKWKYDSDHNAYGIKFSDEPSRLNQISNETQVIRFGTMLGTKSYEQLREATLKYRQNVMAQRKKLVNAQRQQQQQQQEQQEQEHQQA.

Residues 1 to 27 (MPTPSAQLDQGIISSNGGTSGVSASST) show a composition bias toward polar residues. 3 disordered regions span residues 1–28 (MPTP…SSTR), 416–446 (RQQS…QCQQ), and 718–742 (KKLV…HQQA). Over residues 724 to 734 (QRQQQQQQQEQ) the composition is skewed to low complexity.

The protein belongs to the enhancer of polycomb family. As to quaternary structure, component of the NuA4 histone acetyltransferase complex.

The protein localises to the nucleus. Functionally, component of the NuA4 histone acetyltransferase complex which is involved in transcriptional activation of selected genes principally by acetylation of nucleosomal histone H4 and H2A. The NuA4 complex is also involved in DNA repair. Involved in gene silencing by neighboring heterochromatin, blockage of the silencing spreading along the chromosome, and required for cell cycle progression through G2/M. The polypeptide is Enhancer of polycomb-like protein 1 (EPL1) (Eremothecium gossypii (strain ATCC 10895 / CBS 109.51 / FGSC 9923 / NRRL Y-1056) (Yeast)).